A 205-amino-acid chain; its full sequence is Imidazole glycerol phosphate synthase subunit HisH (205 aa).

Residues 1–205 (MIALVDYGGG…FFKMALGDKK (205 aa)) enclose the Glutamine amidotransferase type-1 domain. The active-site Nucleophile is Cys-79. Catalysis depends on residues His-181 and Glu-183.

In terms of assembly, heterodimer of HisH and HisF.

Its subcellular location is the cytoplasm. The enzyme catalyses 5-[(5-phospho-1-deoxy-D-ribulos-1-ylimino)methylamino]-1-(5-phospho-beta-D-ribosyl)imidazole-4-carboxamide + L-glutamine = D-erythro-1-(imidazol-4-yl)glycerol 3-phosphate + 5-amino-1-(5-phospho-beta-D-ribosyl)imidazole-4-carboxamide + L-glutamate + H(+). It catalyses the reaction L-glutamine + H2O = L-glutamate + NH4(+). It functions in the pathway amino-acid biosynthesis; L-histidine biosynthesis; L-histidine from 5-phospho-alpha-D-ribose 1-diphosphate: step 5/9. Functionally, IGPS catalyzes the conversion of PRFAR and glutamine to IGP, AICAR and glutamate. The HisH subunit catalyzes the hydrolysis of glutamine to glutamate and ammonia as part of the synthesis of IGP and AICAR. The resulting ammonia molecule is channeled to the active site of HisF. The chain is Imidazole glycerol phosphate synthase subunit HisH from Dehalococcoides mccartyi (strain ATCC BAA-2266 / KCTC 15142 / 195) (Dehalococcoides ethenogenes (strain 195)).